A 319-amino-acid chain; its full sequence is tRNA uridine(34) hydroxylase (319 aa).

The region spanning 133–231 (EDPNSVVIDT…YLEDVSSENS (99 aa)) is the Rhodanese domain. The active-site Cysteine persulfide intermediate is the C191.

Belongs to the TrhO family.

The catalysed reaction is uridine(34) in tRNA + AH2 + O2 = 5-hydroxyuridine(34) in tRNA + A + H2O. Catalyzes oxygen-dependent 5-hydroxyuridine (ho5U) modification at position 34 in tRNAs. The polypeptide is tRNA uridine(34) hydroxylase (Prochlorococcus marinus (strain NATL2A)).